The chain runs to 64 residues: Large ribosomal subunit protein bL35 (64 aa).

This sequence belongs to the bacterial ribosomal protein bL35 family.

The protein is Large ribosomal subunit protein bL35 of Shewanella putrefaciens (strain CN-32 / ATCC BAA-453).